A 484-amino-acid polypeptide reads, in one-letter code: Aldehyde dehydrogenase family 3 member A2 (484 aa).

Topologically, residues 1-463 (MERQVQRLRQ…FLLKQFNKGR (463 aa)) are cytoplasmic. 185–190 (GNTAVG) provides a ligand contact to NAD(+). Residues Glu-207 and Cys-241 contribute to the active site. Ser-293 is subject to Phosphoserine. A helical transmembrane segment spans residues 464 to 484 (LQLLLLVCLVAVAAVIVKDQL). The Prevents secretion from ER motif lies at 481 to 484 (KDQL).

The protein belongs to the aldehyde dehydrogenase family. Homodimer. In terms of processing, the N-terminus is blocked.

The protein resides in the microsome membrane. It is found in the endoplasmic reticulum membrane. The catalysed reaction is an aldehyde + NAD(+) + H2O = a carboxylate + NADH + 2 H(+). The enzyme catalyses a fatty aldehyde + NAD(+) + H2O = a fatty acid + NADH + 2 H(+). It catalyses the reaction (2E)-hexadecenal + NAD(+) + H2O = (E)-hexadec-2-enoate + NADH + 2 H(+). It carries out the reaction hexadecanoate + NADH + 2 H(+) = hexadecanal + NAD(+) + H2O. The catalysed reaction is 22-oxodocosanoate + NAD(+) + H2O = docosanedioate + NADH + 2 H(+). The enzyme catalyses 2,6,10,14-tetramethylpentadecanal + NAD(+) + H2O = 2,6,10,14-tetramethylpentadecanoate + NADH + 2 H(+). It catalyses the reaction octadecanal + NAD(+) + H2O = octadecanoate + NADH + 2 H(+). It carries out the reaction dodecanoate + NADH + 2 H(+) = dodecanal + NAD(+) + H2O. The catalysed reaction is decanal + NAD(+) + H2O = decanoate + NADH + 2 H(+). The enzyme catalyses tetradecanal + NAD(+) + H2O = tetradecanoate + NADH + 2 H(+). It catalyses the reaction octanal + NAD(+) + H2O = octanoate + NADH + 2 H(+). It carries out the reaction heptanal + NAD(+) + H2O = heptanoate + NADH + 2 H(+). The catalysed reaction is (2E,6E)-farnesal + NAD(+) + H2O = (2E,6E)-farnesoate + NADH + 2 H(+). Catalyzes the oxidation of medium and long-chain aliphatic aldehydes to fatty acids. Active on a variety of saturated and unsaturated aliphatic aldehydes between 6 and 24 carbons in length. Responsible for conversion of the sphingosine 1-phosphate (S1P) degradation product hexadecenal to hexadecenoic acid. In Rattus norvegicus (Rat), this protein is Aldehyde dehydrogenase family 3 member A2 (Aldh3a2).